A 244-amino-acid polypeptide reads, in one-letter code: Protein YIPF4 (244 aa).

Residues 1 to 113 (MQPPGPPPAY…FNRQVVRDNP (113 aa)) lie on the Cytoplasmic side of the membrane. Residues 114–134 (DFWGPLAVVLFFSMISLYGQF) traverse the membrane as a helical segment. At 135–138 (RVVS) the chain is on the extracellular side. The chain crosses the membrane as a helical span at residues 139–159 (WIITIWIFGSLTIFLLARVLG). The Cytoplasmic segment spans residues 160 to 166 (GEVAYGQ). Residues 167–187 (VLGVIGYSLLPLIVIAPVLLV) form a helical membrane-spanning segment. Over 188 to 195 (VGSFEVVS) the chain is Extracellular. Residues 196–216 (TLIKLFGVFWAAYSAASLLVG) traverse the membrane as a helical segment. Over 217-223 (EEFKTKK) the chain is Cytoplasmic. Residues 224–244 (PLLIYPIFLLYIYFLSLYTGV) traverse the membrane as a helical segment.

The protein belongs to the YIP1 family. In terms of assembly, interacts with YIPF3 and YIPF5. As to quaternary structure, (Microbial infection) Interacts with human papillomavirus (HPV) E5 proteins. In terms of tissue distribution, expressed in keratinocytes (at protein level).

The protein resides in the golgi apparatus. It localises to the cis-Golgi network membrane. Involved in the maintenance of the Golgi structure. This chain is Protein YIPF4 (YIPF4), found in Homo sapiens (Human).